The primary structure comprises 237 residues: Phosphoribosylaminoimidazole-succinocarboxamide synthase (237 aa).

Belongs to the SAICAR synthetase family.

It carries out the reaction 5-amino-1-(5-phospho-D-ribosyl)imidazole-4-carboxylate + L-aspartate + ATP = (2S)-2-[5-amino-1-(5-phospho-beta-D-ribosyl)imidazole-4-carboxamido]succinate + ADP + phosphate + 2 H(+). It participates in purine metabolism; IMP biosynthesis via de novo pathway; 5-amino-1-(5-phospho-D-ribosyl)imidazole-4-carboxamide from 5-amino-1-(5-phospho-D-ribosyl)imidazole-4-carboxylate: step 1/2. The sequence is that of Phosphoribosylaminoimidazole-succinocarboxamide synthase from Listeria monocytogenes serovar 1/2a (strain ATCC BAA-679 / EGD-e).